The following is a 100-amino-acid chain: Large ribosomal subunit protein uL23 (100 aa).

It belongs to the universal ribosomal protein uL23 family. As to quaternary structure, part of the 50S ribosomal subunit. Contacts protein L29, and trigger factor when it is bound to the ribosome.

In terms of biological role, one of the early assembly proteins it binds 23S rRNA. One of the proteins that surrounds the polypeptide exit tunnel on the outside of the ribosome. Forms the main docking site for trigger factor binding to the ribosome. This is Large ribosomal subunit protein uL23 from Photobacterium profundum (strain SS9).